Reading from the N-terminus, the 623-residue chain is V-type proton ATPase catalytic subunit A (623 aa).

252 to 259 (GAFGCGKT) serves as a coordination point for ATP.

The protein belongs to the ATPase alpha/beta chains family. V-ATPase is a heteromultimeric enzyme composed of a peripheral catalytic V1 complex (main components: subunits A, B, C, D, E, and F) attached to an integral membrane V0 proton pore complex (main component: the proteolipid protein).

The enzyme catalyses ATP + H2O + 4 H(+)(in) = ADP + phosphate + 5 H(+)(out). Catalytic subunit of the peripheral V1 complex of vacuolar ATPase. V-ATPase vacuolar ATPase is responsible for acidifying a variety of intracellular compartments in eukaryotic cells. The sequence is that of V-type proton ATPase catalytic subunit A from Beta vulgaris (Sugar beet).